The chain runs to 364 residues: Fructose-bisphosphate aldolase B (364 aa).

Ala-2 carries the N-acetylalanine modification. N6-succinyllysine is present on Lys-13. Ser-36 is modified (phosphoserine). The residue at position 39 (Thr-39) is a Phosphothreonine. Arg-43 is a beta-D-fructose 1,6-bisphosphate binding site. At Ser-89 the chain carries Phosphoserine. Thr-119 carries the phosphothreonine modification. The residue at position 121 (Lys-121) is an N6-succinyllysine. The residue at position 132 (Ser-132) is a Phosphoserine. The active-site Proton acceptor is Glu-188. The active-site Schiff-base intermediate with dihydroxyacetone-P is the Lys-230. 4 positions are modified to phosphoserine: Ser-272, Ser-276, Ser-299, and Ser-301. Position 272–274 (272–274 (SGG)) interacts with beta-D-fructose 1,6-bisphosphate. Arg-304 is a beta-D-fructose 1,6-bisphosphate binding site. Residue Ser-309 is modified to Phosphoserine. N6-succinyllysine is present on Lys-317.

Belongs to the class I fructose-bisphosphate aldolase family. Homotetramer. Interacts with BBS1, BBS2, BBS4 and BBS7. Forms a ternary complex with G6PD and TP53; this interaction is direct.

Its subcellular location is the cytoplasm. The protein resides in the cytosol. The protein localises to the cytoskeleton. It localises to the microtubule organizing center. It is found in the centrosome. Its subcellular location is the centriolar satellite. It carries out the reaction beta-D-fructose 1,6-bisphosphate = D-glyceraldehyde 3-phosphate + dihydroxyacetone phosphate. The catalysed reaction is beta-D-fructose 1-phosphate = D-glyceraldehyde + dihydroxyacetone phosphate. It functions in the pathway carbohydrate degradation; glycolysis; D-glyceraldehyde 3-phosphate and glycerone phosphate from D-glucose: step 4/4. It participates in carbohydrate biosynthesis; gluconeogenesis. Its pathway is carbohydrate metabolism; fructose metabolism. Functionally, catalyzes the aldol cleavage of fructose 1,6-biphosphate to form two triosephosphates dihydroxyacetone phosphate and D-glyceraldehyde 3-phosphate in glycolysis as well as the reverse stereospecific aldol addition reaction in gluconeogenesis. In fructolysis, metabolizes fructose 1-phosphate derived from the phosphorylation of dietary fructose by fructokinase into dihydroxyacetone phosphate and D-glyceraldehyde. Acts as an adapter independently of its enzymatic activity, exerts a tumor suppressor role by stabilizing the ternary complex with G6PD and TP53 to inhibit G6PD activity and keep oxidative pentose phosphate metabolism in check. This chain is Fructose-bisphosphate aldolase B (ALDOB), found in Oryctolagus cuniculus (Rabbit).